Reading from the N-terminus, the 371-residue chain is MGGSGNWIRSLISNRKPVNDQQEKLSDKSSKKKWKLWRISSESLASSSFKSRGSYAASSLGSELPSFSADEAFTTAMAALIRAPPRDFLMVKREWASTRIQAAFRAFLARQAFRALKAVVRIQAIFRGRQVRKQAAVTLRCMQALVRVQSRVRAHRRAPSDSLELKDPVKQTEKGWCGSPRSIKEVKTKLQMKQEGAIKRERAMVYALTHQSRTCPSPSGRAITHHGLRKSSPGWNWYDDVGTFSRKSSESSVLSEYETVTVRKNNLSSTRVLARPPLLLPPVSSGMSYDSLHDETSTSSTSQSPVAFSSSVLDGGGYYRKPSYMSLTQSTQAKQRQSGLSCNGDARRSAGSDQCTDLYPPGNVWAKSQRS.

A disordered region spans residues 1–32; that stretch reads MGGSGNWIRSLISNRKPVNDQQEKLSDKSSKK. The segment covering 17–29 has biased composition (basic and acidic residues); it reads PVNDQQEKLSDKS. IQ domains lie at 93 to 121 and 122 to 144; these read REWA…AVVR and IQAI…CMQA. The tract at residues 125 to 141 is calmodulin-binding; it reads IFRGRQVRKQAAVTLRC. Disordered regions lie at residues 285–308 and 327–371; these read SGMS…PVAF and LTQS…SQRS. Polar residues-rich tracts occupy residues 297–308 and 327–341; these read STSSTSQSPVAF and LTQS…SGLS.

It belongs to the IQD family. As to quaternary structure, binds to multiple calmodulin (CaM) in the presence of Ca(2+) and CaM-like proteins.

It localises to the nucleus. It is found in the nucleus envelope. Its subcellular location is the cytoplasm. The protein resides in the cytoskeleton. Functionally, may be involved in cooperative interactions with calmodulins or calmodulin-like proteins. Recruits calmodulin proteins to microtubules, thus being a potential scaffold in cellular signaling and trafficking. May associate with nucleic acids and regulate gene expression at the transcriptional or post-transcriptional level. In Arabidopsis thaliana (Mouse-ear cress), this protein is Protein IQ-DOMAIN 7.